We begin with the raw amino-acid sequence, 100 residues long: Nucleoid-associated protein jhp_0031 (100 aa).

This sequence belongs to the YbaB/EbfC family. As to quaternary structure, homodimer.

It localises to the cytoplasm. The protein resides in the nucleoid. Its function is as follows. Binds to DNA and alters its conformation. May be involved in regulation of gene expression, nucleoid organization and DNA protection. The polypeptide is Nucleoid-associated protein jhp_0031 (Helicobacter pylori (strain J99 / ATCC 700824) (Campylobacter pylori J99)).